The primary structure comprises 348 residues: D-alanine--D-alanine ligase (348 aa).

The region spanning 132–334 is the ATP-grasp domain; it reads KRILEVAGVP…YSDLIKELVV (203 aa). ATP is bound at residue 162-217; sequence LEKLTFPVFVKPANMGSSVGISKAENESELRSAIDLALKYDSRILIEQGVVAREIE. Mg(2+)-binding residues include aspartate 288, glutamate 301, and asparagine 303.

The protein belongs to the D-alanine--D-alanine ligase family. Mg(2+) serves as cofactor. It depends on Mn(2+) as a cofactor.

It is found in the cytoplasm. The catalysed reaction is 2 D-alanine + ATP = D-alanyl-D-alanine + ADP + phosphate + H(+). The protein operates within cell wall biogenesis; peptidoglycan biosynthesis. In terms of biological role, cell wall formation. The chain is D-alanine--D-alanine ligase from Streptococcus thermophilus (strain ATCC BAA-491 / LMD-9).